The sequence spans 305 residues: tRNA pseudouridine synthase B (305 aa).

Asp39 functions as the Nucleophile in the catalytic mechanism.

It belongs to the pseudouridine synthase TruB family. Type 1 subfamily.

The enzyme catalyses uridine(55) in tRNA = pseudouridine(55) in tRNA. Its function is as follows. Responsible for synthesis of pseudouridine from uracil-55 in the psi GC loop of transfer RNAs. The protein is tRNA pseudouridine synthase B of Staphylococcus haemolyticus (strain JCSC1435).